The sequence spans 164 residues: ATP synthase subunit b (164 aa).

Residues 6-26 form a helical membrane-spanning segment; the sequence is GELIGNFILITGSFILLLVLI.

The protein belongs to the ATPase B chain family. F-type ATPases have 2 components, F(1) - the catalytic core - and F(0) - the membrane proton channel. F(1) has five subunits: alpha(3), beta(3), gamma(1), delta(1), epsilon(1). F(0) has three main subunits: a(1), b(2) and c(10-14). The alpha and beta chains form an alternating ring which encloses part of the gamma chain. F(1) is attached to F(0) by a central stalk formed by the gamma and epsilon chains, while a peripheral stalk is formed by the delta and b chains.

The protein localises to the cell membrane. In terms of biological role, f(1)F(0) ATP synthase produces ATP from ADP in the presence of a proton or sodium gradient. F-type ATPases consist of two structural domains, F(1) containing the extramembraneous catalytic core and F(0) containing the membrane proton channel, linked together by a central stalk and a peripheral stalk. During catalysis, ATP synthesis in the catalytic domain of F(1) is coupled via a rotary mechanism of the central stalk subunits to proton translocation. Functionally, component of the F(0) channel, it forms part of the peripheral stalk, linking F(1) to F(0). The chain is ATP synthase subunit b from Streptococcus pneumoniae serotype 2 (strain D39 / NCTC 7466).